We begin with the raw amino-acid sequence, 79 residues long: MPKRILSGVVTSDANDQTVSVSVERRFTHPVLKKTIRKSKKYRAHDENNTFKKGDAVRIVECAPKSKTKRWEVLQAAEV.

The protein belongs to the universal ribosomal protein uS17 family. In terms of assembly, part of the 30S ribosomal subunit.

In terms of biological role, one of the primary rRNA binding proteins, it binds specifically to the 5'-end of 16S ribosomal RNA. The chain is Small ribosomal subunit protein uS17 from Roseobacter denitrificans (strain ATCC 33942 / OCh 114) (Erythrobacter sp. (strain OCh 114)).